A 638-amino-acid polypeptide reads, in one-letter code: DNA-directed RNA polymerase I subunit RPA1 (638 aa).

A compositionally biased stretch (acidic residues) spans 297 to 317 (EYDEEDDESSGESEVREGDEE). Residues 297-321 (EYDEEDDESSGESEVREGDEEQEKK) are disordered.

It belongs to the RNA polymerase beta' chain family. As to quaternary structure, each class of RNA polymerase is assembled from 9 to 14 different polypeptides. This subunit is the largest component of RNA polymerase I.

It is found in the nucleus. The catalysed reaction is RNA(n) + a ribonucleoside 5'-triphosphate = RNA(n+1) + diphosphate. Functionally, DNA-dependent RNA polymerase catalyzes the transcription of DNA into RNA using the four ribonucleoside triphosphates as substrates. RNA polymerase I is essentially used to transcribe ribosomal DNA units. The polypeptide is DNA-directed RNA polymerase I subunit RPA1 (RPA1) (Euplotoides octocarinatus (Freshwater ciliate)).